A 187-amino-acid chain; its full sequence is Casparian strip membrane protein 1 (187 aa).

The segment covering 1–10 (MKGSSEHGET) has biased composition (basic and acidic residues). A disordered region spans residues 1 to 20 (MKGSSEHGETSKQAPLGSSR). At 1 to 27 (MKGSSEHGETSKQAPLGSSRGVSKGVS) the chain is on the cytoplasmic side. The chain crosses the membrane as a helical span at residues 28–48 (VLDLILRFIAIIGTLASAIAM). At 49-75 (GTTNETLPFFTQFIRFKAQYSDLPTLT) the chain is on the extracellular side. N-linked (GlcNAc...) asparagine glycosylation is present at asparagine 52. A helical membrane pass occupies residues 76–96 (FFVVANSIVCAYLTLSLPLSI). Over 97–115 (VHIIRSRAKYSRLLLVVLD) the chain is Cytoplasmic. Residues 116 to 136 (AAMLALVTPGASAAAAIVYLA) traverse the membrane as a helical segment. Topologically, residues 137 to 162 (HKGNVRANWLAICQQFDSFCERISGC) are extracellular. A helical membrane pass occupies residues 163–183 (LIGSFGAMVMLVLLLLLSAIA). Residues 184 to 187 (LARR) are Cytoplasmic-facing.

Belongs to the Casparian strip membrane proteins (CASP) family. As to quaternary structure, homodimer and heterodimers.

The protein localises to the cell membrane. Functionally, regulates membrane-cell wall junctions and localized cell wall deposition. Required for establishment of the Casparian strip membrane domain (CSD) and the subsequent formation of Casparian strips, a cell wall modification of the root endodermis that determines an apoplastic barrier between the intraorganismal apoplasm and the extraorganismal apoplasm and prevents lateral diffusion. The sequence is that of Casparian strip membrane protein 1 from Zea mays (Maize).